Here is a 190-residue protein sequence, read N- to C-terminus: Large ribosomal subunit protein uL10 (190 aa).

The disordered stretch occupies residues 170–190 (AAGAPAEAAPVEAPAAETVDA).

It belongs to the universal ribosomal protein uL10 family. As to quaternary structure, part of the ribosomal stalk of the 50S ribosomal subunit. The N-terminus interacts with L11 and the large rRNA to form the base of the stalk. The C-terminus forms an elongated spine to which L12 dimers bind in a sequential fashion forming a multimeric L10(L12)X complex.

Its function is as follows. Forms part of the ribosomal stalk, playing a central role in the interaction of the ribosome with GTP-bound translation factors. The polypeptide is Large ribosomal subunit protein uL10 (Kineococcus radiotolerans (strain ATCC BAA-149 / DSM 14245 / SRS30216)).